Reading from the N-terminus, the 249-residue chain is UPF0758 protein BMEI0718 (249 aa).

The interval 1-34 (MAKKKDTPGDGEFPGFSDTLQRTPKLEKPHYAGH) is disordered. The span at 24–34 (PKLEKPHYAGH) shows a compositional bias: basic and acidic residues. Residues 127–249 (VLGSWDKVIN…HASLRSLRLI (123 aa)) enclose the MPN domain. 3 residues coordinate Zn(2+): histidine 198, histidine 200, and aspartate 211. Residues 198–211 (HNHPSGDPTPSRAD) carry the JAMM motif motif.

It belongs to the UPF0758 family.

The protein is UPF0758 protein BMEI0718 of Brucella melitensis biotype 1 (strain ATCC 23456 / CCUG 17765 / NCTC 10094 / 16M).